The chain runs to 226 residues: ATP-dependent dethiobiotin synthetase BioD (226 aa).

An ATP-binding site is contributed by 12 to 17 (GVGKTV). T16 lines the Mg(2+) pocket. The active site involves K37. Residue T41 participates in substrate binding. ATP-binding positions include D49, 108-111 (EGAG), 169-170 (GS), and 197-199 (PAG). The Mg(2+) site is built by D49 and E108.

The protein belongs to the dethiobiotin synthetase family. In terms of assembly, homodimer. Requires Mg(2+) as cofactor.

The protein resides in the cytoplasm. It catalyses the reaction (7R,8S)-7,8-diammoniononanoate + CO2 + ATP = (4R,5S)-dethiobiotin + ADP + phosphate + 3 H(+). It functions in the pathway cofactor biosynthesis; biotin biosynthesis; biotin from 7,8-diaminononanoate: step 1/2. In terms of biological role, catalyzes a mechanistically unusual reaction, the ATP-dependent insertion of CO2 between the N7 and N8 nitrogen atoms of 7,8-diaminopelargonic acid (DAPA, also called 7,8-diammoniononanoate) to form a ureido ring. This is ATP-dependent dethiobiotin synthetase BioD from Mycobacterium bovis (strain BCG / Pasteur 1173P2).